The sequence spans 650 residues: Probable protein phosphatase 2C 36 (650 aa).

The interval 146–166 is disordered; the sequence is SGKKTKEKAKLKKSGSKSFTK. Over residues 148–166 the composition is skewed to basic residues; sequence KKTKEKAKLKKSGSKSFTK. The region spanning 239-641 is the PPM-type phosphatase domain; it reads ESALEEPKIQ…DDVSVIVISL (403 aa). Positions 276, 277, 569, and 632 each coordinate Mn(2+).

Belongs to the PP2C family. Mg(2+) serves as cofactor. Mn(2+) is required as a cofactor.

The protein resides in the nucleus. The catalysed reaction is O-phospho-L-seryl-[protein] + H2O = L-seryl-[protein] + phosphate. It carries out the reaction O-phospho-L-threonyl-[protein] + H2O = L-threonyl-[protein] + phosphate. This is Probable protein phosphatase 2C 36 (PLL3) from Arabidopsis thaliana (Mouse-ear cress).